Here is a 439-residue protein sequence, read N- to C-terminus: Glutamyl-tRNA reductase (439 aa).

Residues 48–51 (TCNR), S107, 112–114 (EPQ), and Q118 each bind substrate. The active-site Nucleophile is the C49. Position 187-192 (187-192 (GAGEMA)) interacts with NADP(+).

It belongs to the glutamyl-tRNA reductase family. As to quaternary structure, homodimer.

The catalysed reaction is (S)-4-amino-5-oxopentanoate + tRNA(Glu) + NADP(+) = L-glutamyl-tRNA(Glu) + NADPH + H(+). It participates in porphyrin-containing compound metabolism; protoporphyrin-IX biosynthesis; 5-aminolevulinate from L-glutamyl-tRNA(Glu): step 1/2. Its function is as follows. Catalyzes the NADPH-dependent reduction of glutamyl-tRNA(Glu) to glutamate 1-semialdehyde (GSA). In Maridesulfovibrio salexigens (strain ATCC 14822 / DSM 2638 / NCIMB 8403 / VKM B-1763) (Desulfovibrio salexigens), this protein is Glutamyl-tRNA reductase.